Consider the following 66-residue polypeptide: Large ribosomal subunit protein bL33 (66 aa).

It belongs to the bacterial ribosomal protein bL33 family.

This Prochlorococcus marinus (strain MIT 9303) protein is Large ribosomal subunit protein bL33.